Reading from the N-terminus, the 399-residue chain is Proteinase-activated receptor 2 (399 aa).

The N-terminal stretch at 1-25 (MRSLSLAWLLGGITLLAASVSCSRT) is a signal peptide. A propeptide spans 26–38 (ENLAPGRNNSKGR) (removed for receptor activation). N33 is a glycosylation site (N-linked (GlcNAc...) asparagine). Residues 39 to 73 (SLIGRLETQPPITGKGVPVEPGFSIDEFSASILTG) are Extracellular-facing. Residues 74 to 103 (KLTTVFLPVVYIIVFVIGLPSNGMALWIFL) form a helical membrane-spanning segment. The Cytoplasmic segment spans residues 104–110 (FRTKKKH). Residues 111–139 (PAVIYMANLALADLLSVIWFPLKISYHLH) traverse the membrane as a helical segment. Residues 140–151 (GNNWVYGEALCK) lie on the Extracellular side of the membrane. Cysteines 150 and 228 form a disulfide. Residues 152–179 (VLIGFFYGNMYCSILFMTCLSVQRYWVI) traverse the membrane as a helical segment. Residues 180–185 (VNPMGH) are Cytoplasmic-facing. The chain crosses the membrane as a helical span at residues 186–213 (PRKKANIAVGVSLAIWLLIFLVTIPLYV). At 214 to 237 (MKQTIYIPALNITTCHDVLPEEVL) the chain is on the extracellular side. Residue N224 is glycosylated (N-linked (GlcNAc...) asparagine). Residues 238-271 (VGDMFNYFLSLAIGVFLFPALLTASAYVLMIKTL) traverse the membrane as a helical segment. At 272–279 (RSSAMDEH) the chain is on the cytoplasmic side. The chain crosses the membrane as a helical span at residues 280 to 319 (SEKKRQRAIRLIITVLAMYFICFAPSNLLLVVHYFLIKTQ). Topologically, residues 320–325 (RQSHVY) are extracellular. A helical membrane pass occupies residues 326–349 (ALYLVALCLSTLNSCIDPFVYYFV). Residues 350–399 (SKDFRDHARNALLCRSVRTVNRMQISLSSNKFSRKSGSYSSSSTSVKTSY) are Cytoplasmic-facing. The S-palmitoyl cysteine moiety is linked to residue C363.

It belongs to the G-protein coupled receptor 1 family. In terms of assembly, interacts with TLR4, COPS5 and TMED2. Interacts with GNAQ, GNA11, GNA12, GNA13 and GNA14. In terms of processing, a proteolytic cleavage generates a new N-terminus that functions as a tethered ligand. Activating serine proteases include trypsin, mast cell tryptase, coagulation factors VII and Xa, myeloblastin/PRTN3 and membrane-type serine protease 1/ST14. Proposed subsequent cleavage by serine proteases is leading to receptor deactivation and include neutrophil elastase and cathepsin G. At least in part, implicated proteases are also shown to activate the receptor; the glycosylation status of the receptor is thought to contribute to the difference. N-glycosylated and sialylated. Post-translationally, multiple phosphorylated on serine and threonine residues in the cytoplasmic region upon receptor activation; required for receptor desensitization and recruitment of beta-arrestin. In terms of processing, monoubiquitinated by Cbl at the plasma membrane and in early endosomes; not required for receptor endocytosis but for translocation to late endosomes or lysosomes. Deubiquitination involves Stambp and Usp8; required for lysosomal trafficking and receptor degradation.

The protein resides in the cell membrane. Receptor for trypsin and trypsin-like enzymes coupled to G proteins. Its function is mediated through the activation of several signaling pathways including phospholipase C (PLC), intracellular calcium, mitogen-activated protein kinase (MAPK), I-kappaB kinase/NF-kappaB and Rho. Can also be transactivated by cleaved F2r/Par1. Involved in modulation of inflammatory responses and regulation of innate and adaptive immunity, and acts as a sensor for proteolytic enzymes generated during infection. Generally is promoting inflammation. Can signal synergistically with Tlr4 and probably Tlr2 in inflammatory responses and modulates Tlr3 signaling. Has a protective role in establishing the endothelial barrier; the activity involves coagulation factor X. Regulates endothelial cell barrier integrity during neutrophil extravasation, probably following proteolytic cleavage by PRTN3. Proposed to have a bronchoprotective role in airway epithelium, but also shown to compromise the airway epithelial barrier by interrupting E-cadherin adhesion. Involved in the regulation of vascular tone; activation results in hypotension presumably mediated by vasodilation. Associates with a subset of G proteins alpha subunits such as GNAQ, GNA11, GNA14, GNA12 and GNA13, but probably not with G(o)-alpha, G(i) subunit alpha-1 and G(i) subunit alpha-2. Believed to be a class B receptor which internalizes as a complex with arrestin and traffic with it to endosomal vesicles, presumably as desensitized receptor, for extended periods of time. Mediates inhibition of TNF-alpha stimulated JNK phosphorylation via coupling to GNAQ and GNA11; the function involves dissociation of Ripk1 and Tradd from Tnfr1. Mediates phosphorylation of nuclear factor NF-kappa-B RELA subunit at 'Ser-536'; the function involves Ikbkb and is predominantly independent of G proteins. Involved in cellular migration. Involved in cytoskeletal rearrangement and chemotaxis through beta-arrestin-promoted scaffolds; the function is independent of GNAQ and GNA11 and involves promotion of cofilin dephosphorylation and actin filament severing. Induces redistribution of Cops5 from the plasma membrane to the cytosol and activation of the JNK cascade is mediated by Cops5. Involved in the recruitment of leukocytes to the sites of inflammation and is the major PAR receptor capable of modulating eosinophil function such as pro-inflammatory cytokine secretion, superoxide production and degranulation. During inflammation promotes dendritic cell maturation, trafficking to the lymph nodes and subsequent T-cell activation. Involved in antimicrobial response of innate immune cells; activation enhances phagocytosis of Gram-positive and killing of Gram-negative bacteria. Acts synergistically with interferon-gamma in enhancing antiviral responses. Mediates activation of pro-inflammatory and pro-fibrotic responses in fibroblasts, triggered by coagulation factor Xa (F10). Probably mediates activation of barrier protective signaling responses in endothelial cells, triggered by coagulation factor Xa (F10). The chain is Proteinase-activated receptor 2 (F2rl1) from Mus musculus (Mouse).